The following is a 251-amino-acid chain: Cell division protein ZapD (251 aa).

Belongs to the ZapD family. In terms of assembly, interacts with FtsZ.

The protein resides in the cytoplasm. Its function is as follows. Cell division factor that enhances FtsZ-ring assembly. Directly interacts with FtsZ and promotes bundling of FtsZ protofilaments, with a reduction in FtsZ GTPase activity. The chain is Cell division protein ZapD from Janthinobacterium sp. (strain Marseille) (Minibacterium massiliensis).